We begin with the raw amino-acid sequence, 819 residues long: uncharacterized protein (819 aa).

At Ser16 the chain carries Phosphoserine. 2 disordered regions span residues 28 to 83 and 96 to 134; these read SNTQ…PPTV and PTFTLSVSPDSQSSSATHQNDYISSPHADFSFSPPASKI. A DNA-binding region (zn(2)-C6 fungal-type) is located at residues 36–63; sequence KIRFTENENDLSPERAQKEPVSIPHGRY. Composition is skewed to polar residues over residues 64–77 and 96–118; these read TWSTSPDTDSSHLP and PTFTLSVSPDSQSSSATHQNDYI.

The protein resides in the nucleus. This is an uncharacterized protein from Schizosaccharomyces pombe (strain 972 / ATCC 24843) (Fission yeast).